Here is a 4262-residue protein sequence, read N- to C-terminus: Polyketide synthase PksM (4262 aa).

The tract at residues 1–114 (MITEQLHISL…ADMHRKEQTA (114 aa)) is N-terminal hotdog fold 1. A PKS/mFAS DH 1 domain is found at 1–271 (MITEQLHISL…GKSVRNMSAF (271 aa)). The active-site Proton acceptor; for dehydratase activity 1 is His18. The segment at 129–271 (DRILNLDEIY…GKSVRNMSAF (143 aa)) is C-terminal hotdog fold 1. The active-site Proton donor; for dehydratase activity 1 is Asp190. In terms of domain architecture, Carrier 1 spans 293-367 (PAFEMYLRQL…ELAAHLADHY (75 aa)). The residue at position 327 (Ser327) is an O-(pantetheine 4'-phosphoryl)serine. A Ketosynthase family 3 (KS3) 1 domain is found at 393–831 (GEDIAIIGMA…GSNAHLILEE (439 aa)). Catalysis depends on for beta-ketoacyl synthase 1 activity residues Cys569, His704, and His744. Positions 1009–1135 (HPLVHRNTSD…GRAVISDEAE (127 aa)) are N-terminal hotdog fold 2. The PKS/mFAS DH 2 domain occupies 1009–1301 (HPLVHRNTSD…MRALDGEQHS (293 aa)). His1038 serves as the catalytic Proton acceptor; for dehydratase activity 2. Residues 1149 to 1301 (SLDTVTSEQC…MRALDGEQHS (153 aa)) form a C-terminal hotdog fold 2 region. The active-site Proton donor; for dehydratase activity 2 is Asp1211. Residues 2188–2261 (EKSTEYMKKL…ALVEHFIKTK (74 aa)) form the Carrier 2 domain. The residue at position 2222 (Ser2222) is an O-(pantetheine 4'-phosphoryl)serine. A compositionally biased stretch (polar residues) spans 2275–2291 (VQQHTPAESRTQSSQKP). A disordered region spans residues 2275 to 2313 (VQQHTPAESRTQSSQKPDQAAKRTRRFRKLGFSGEKETP). The region spanning 2319–2734 (SRDVAVIGIS…GSNAHIILEE (416 aa)) is the Ketosynthase family 3 (KS3) 2 domain. Catalysis depends on for beta-ketoacyl synthase 2 activity residues Cys2476, His2611, and His2651. Positions 2750-2826 (ALIVLSAKNM…DFIENKADSL (77 aa)) form a coiled coil. The region spanning 3409–3486 (SIEKRLEHDL…ELISFFLTDH (78 aa)) is the Carrier 3 domain. Ser3446 bears the O-(pantetheine 4'-phosphoryl)serine mark. Positions 3529-3944 (DEPIAIIGMS…GTNAHAVIEE (416 aa)) constitute a Ketosynthase family 3 (KS3) 3 domain. Residues Cys3690, His3825, and His3865 each act as for beta-ketoacyl synthase 3 activity in the active site. Residues 4004–4033 (KAMEARLAIVANNQEQLVRKLKEYVEAMKN) adopt a coiled-coil conformation. The Carrier 4 domain occupies 4135-4212 (NGKTHIQKII…ALSDHLALKA (78 aa)). Ser4172 bears the O-(pantetheine 4'-phosphoryl)serine mark.

It depends on pantetheine 4'-phosphate as a cofactor.

The protein localises to the cytoplasm. It participates in antibiotic biosynthesis; bacillaene biosynthesis. In terms of biological role, involved in some intermediate steps for the synthesis of the antibiotic polyketide bacillaene which is involved in secondary metabolism. The protein is Polyketide synthase PksM (pksM) of Bacillus subtilis (strain 168).